The following is a 584-amino-acid chain: Segmentation polarity homeobox protein engrailed (584 aa).

5 disordered regions span residues Met-1–His-27, Glu-141–Ser-198, Ile-343–Thr-380, Cys-392–Asn-451, and Asp-465–Ala-492. A compositionally biased stretch (pro residues) spans Ala-12 to Pro-23. Residues Thr-160 to Asp-174 show a composition bias toward acidic residues. Over residues His-189–Ser-198 the composition is skewed to polar residues. 2 stretches are compositionally biased toward low complexity: residues Ser-348–Thr-380 and Cys-392–Ser-405. Residues Gln-478–Pro-489 show a composition bias toward basic and acidic residues. The homeobox DNA-binding region spans Glu-486–Thr-545.

It belongs to the engrailed homeobox family.

It is found in the nucleus. Functionally, this protein specifies the body segmentation pattern. It is required for the development of the central nervous system. Transcriptional regulator that repress activated promoters. In Drosophila virilis (Fruit fly), this protein is Segmentation polarity homeobox protein engrailed (en).